A 138-amino-acid polypeptide reads, in one-letter code: ATP synthase epsilon chain (138 aa).

This sequence belongs to the ATPase epsilon chain family. F-type ATPases have 2 components, CF(1) - the catalytic core - and CF(0) - the membrane proton channel. CF(1) has five subunits: alpha(3), beta(3), gamma(1), delta(1), epsilon(1). CF(0) has four main subunits: a(1), b(1), b'(1) and c(9-12).

Its subcellular location is the cellular thylakoid membrane. In terms of biological role, produces ATP from ADP in the presence of a proton gradient across the membrane. Its function is as follows. The complex from the organism is particularly stable to disruption and remains functional after 6 hours at 55 degrees Celsius. The polypeptide is ATP synthase epsilon chain (Thermosynechococcus vestitus (strain NIES-2133 / IAM M-273 / BP-1)).